Consider the following 257-residue polypeptide: Protein orai-2 (257 aa).

Transmembrane regions (helical) follow at residues 67–84 (TSAL…EVQL), 95–115 (LIAF…ALLI), 149–169 (LAWG…VVLL), and 199–219 (AALV…VFTI).

This sequence belongs to the Orai family.

Its subcellular location is the membrane. Functionally, ca(2+) release-activated Ca(2+)-like (CRAC-like) channel subunit which mediates Ca(2+) influx and increase in Ca(2+)-selective current by synergy with the Ca(2+) sensor, STIM1. In Gallus gallus (Chicken), this protein is Protein orai-2 (ORAI2).